The sequence spans 180 residues: Protein SPMIP9 (180 aa).

As to quaternary structure, microtubule inner protein component of sperm flagellar doublet microtubules.

The protein resides in the nucleus. It is found in the cytoplasm. It localises to the cytoskeleton. The protein localises to the flagellum axoneme. In terms of biological role, microtubule inner protein (MIP) part of the dynein-decorated doublet microtubules (DMTs) in flagella axoneme. In Bos taurus (Bovine), this protein is Protein SPMIP9 (SPMIP9).